Consider the following 224-residue polypeptide: Transposase for insertion sequence-like element IS431mec (224 aa).

The segment at residues 33-52 is a DNA-binding region (H-T-H motif); it reads EILRERGVNVHHSTVYRWVQ. The region spanning 73–222 is the Integrase catalytic domain; it reads WRIDETYIKI…SPCHEISIML (150 aa).

Involved in the transposition of the insertion sequence. The protein is Transposase for insertion sequence-like element IS431mec (tnp) of Staphylococcus aureus (strain NCTC 8325 / PS 47).